The primary structure comprises 394 residues: Phloroisovalerophenone synthase (394 aa).

Cysteine 166 is an active-site residue.

It belongs to the thiolase-like superfamily. Chalcone/stilbene synthases family. Homodimer. As to expression, expressed in lupulin gland. Present at low levels in leaves but accumulates in cones.

It carries out the reaction 3-methylbutanoyl-CoA + 3 malonyl-CoA + 3 H(+) = phlorisovalerophenone + 3 CO2 + 4 CoA. It catalyses the reaction (E)-4-coumaroyl-CoA + 3 malonyl-CoA + 3 H(+) = 2',4,4',6'-tetrahydroxychalcone + 3 CO2 + 4 CoA. The catalysed reaction is 2-methylpropanoyl-CoA + 3 malonyl-CoA + 3 H(+) = phlorisobutanophenone + 3 CO2 + 4 CoA. It participates in secondary metabolite biosynthesis. In terms of biological role, involved in the biosynthesis of prenylated phenolics natural products which contribute to the bitter taste of beer and display broad biological activities. Polyketide synthase that can use 3-methylbutanoyl-CoA (isovaleryl-CoA) and 2-methylpropanoyl-CoA (isobutyryl-CoA) as substrates to produce phlorisovalerophenone (PIVP) and phlorisobutyrophenone (2-methyl-1-(2,4,6-trihydroxyphenyl)propan-1-one), respectively, intermediates in the biosynthesis of the bitter acids (alpha and beta) acids. Can also produce naringenin-chalcone (2',4,4',6'-tetrahydroxychalcone) from 4-coumaroyl-CoA with a lower efficiency. The chain is Phloroisovalerophenone synthase from Humulus lupulus (European hop).